Reading from the N-terminus, the 347-residue chain is Eukaryotic translation initiation factor 3 subunit I (347 aa).

WD repeat units follow at residues 8–47 (GHERPLTQVKYNKEGDLVFSCSKDSVASVWYSINGERLGT), 50–89 (GHTGTIWSIDVDPFTESCVTGSADYSIKVWKVQTGTVIHT), 91–135 (TAPV…VTKE), 151–190 (ENHKGVTVAGWSAEGKYIIACHKDGKVSKYNAKTGEFITS), 193–232 (LHTQTIGDIQFSPDRTYFITSSRDSMAYILDVESMEQLKS), and 290–329 (GHFGPLNYVAVNPQGTSYTSGGEDGFARIHHFEKSYFDFK).

The protein belongs to the eIF-3 subunit I family. In terms of assembly, component of the eukaryotic translation initiation factor 3 (eIF-3) complex.

The protein localises to the cytoplasm. Its function is as follows. Component of the eukaryotic translation initiation factor 3 (eIF-3) complex, which is involved in protein synthesis of a specialized repertoire of mRNAs and, together with other initiation factors, stimulates binding of mRNA and methionyl-tRNAi to the 40S ribosome. The eIF-3 complex specifically targets and initiates translation of a subset of mRNAs involved in cell proliferation. The polypeptide is Eukaryotic translation initiation factor 3 subunit I (Vanderwaltozyma polyspora (strain ATCC 22028 / DSM 70294 / BCRC 21397 / CBS 2163 / NBRC 10782 / NRRL Y-8283 / UCD 57-17) (Kluyveromyces polysporus)).